We begin with the raw amino-acid sequence, 417 residues long: D-amino acid dehydrogenase (417 aa).

3-17 is a binding site for FAD; it reads VVILGSGVVGVSTAW.

Belongs to the DadA oxidoreductase family. Requires FAD as cofactor.

It carries out the reaction a D-alpha-amino acid + A + H2O = a 2-oxocarboxylate + AH2 + NH4(+). The protein operates within amino-acid degradation; D-alanine degradation; NH(3) and pyruvate from D-alanine: step 1/1. Oxidative deamination of D-amino acids. The polypeptide is D-amino acid dehydrogenase (Pectobacterium carotovorum subsp. carotovorum (strain PC1)).